A 404-amino-acid chain; its full sequence is Cysteine desulfurase IscS (404 aa).

Pyridoxal 5'-phosphate contacts are provided by residues 75 to 76, N155, Q183, and 203 to 205; these read AT and SGH. K206 carries the N6-(pyridoxal phosphate)lysine modification. Residue T243 participates in pyridoxal 5'-phosphate binding. C328 acts as the Cysteine persulfide intermediate in catalysis. C328 lines the [2Fe-2S] cluster pocket.

Belongs to the class-V pyridoxal-phosphate-dependent aminotransferase family. NifS/IscS subfamily. In terms of assembly, homodimer. Forms a heterotetramer with IscU, interacts with other sulfur acceptors. It depends on pyridoxal 5'-phosphate as a cofactor.

It is found in the cytoplasm. It catalyses the reaction (sulfur carrier)-H + L-cysteine = (sulfur carrier)-SH + L-alanine. It participates in cofactor biosynthesis; iron-sulfur cluster biosynthesis. In terms of biological role, master enzyme that delivers sulfur to a number of partners involved in Fe-S cluster assembly, tRNA modification or cofactor biosynthesis. Catalyzes the removal of elemental sulfur atoms from cysteine to produce alanine. Functions as a sulfur delivery protein for Fe-S cluster synthesis onto IscU, an Fe-S scaffold assembly protein, as well as other S acceptor proteins. The chain is Cysteine desulfurase IscS from Shewanella halifaxensis (strain HAW-EB4).